Consider the following 3420-residue polypeptide: Adhesin BmaC autotransporter (3420 aa).

Residues 1 to 72 (MPNLANQDFT…SLVMAGTAAA (72 aa)) form the signal peptide. One can recognise an Autotransporter domain in the interval 3138-3420 (GPSGNNGIWA…AGSVGLRVRW (283 aa)).

It localises to the cell surface. The protein resides in the cell outer membrane. Fibronectin-binding protein, which is involved in adhesion to host cells and in the infective process. Mediates the binding of B.suis to the extracellular matrix and to non-phagocytic cells via cell-associated fibronectin. The polypeptide is Adhesin BmaC autotransporter (Brucella suis biovar 1 (strain 1330)).